Reading from the N-terminus, the 243-residue chain is Carboxy-S-adenosyl-L-methionine synthase (243 aa).

S-adenosyl-L-methionine is bound by residues Tyr-39, 64–66, 90–91, 118–119, Asn-133, and Arg-200; these read GCS, DN, and DL.

Belongs to the class I-like SAM-binding methyltransferase superfamily. Cx-SAM synthase family. As to quaternary structure, homodimer.

It carries out the reaction prephenate + S-adenosyl-L-methionine = carboxy-S-adenosyl-L-methionine + 3-phenylpyruvate + H2O. In terms of biological role, catalyzes the conversion of S-adenosyl-L-methionine (SAM) to carboxy-S-adenosyl-L-methionine (Cx-SAM). The chain is Carboxy-S-adenosyl-L-methionine synthase from Idiomarina loihiensis (strain ATCC BAA-735 / DSM 15497 / L2-TR).